We begin with the raw amino-acid sequence, 231 residues long: Cytochrome c oxidase assembly factor 7 (231 aa).

Sel1-like repeat units follow at residues 34 to 66, 68 to 104, 108 to 145, 146 to 182, and 183 to 218; these read PDGC…DQNE, SESC…NKGG, IDSC…DGNF, AASC…SLGH, and MWGC…DLHR.

It belongs to the hcp beta-lactamase family.

Its subcellular location is the mitochondrion intermembrane space. Functionally, may be required for assembly of mitochondrial respiratory chain complexes. This Xenopus tropicalis (Western clawed frog) protein is Cytochrome c oxidase assembly factor 7 (coa7).